The primary structure comprises 220 residues: Probable metallo-hydrolase YybB (220 aa).

7 residues coordinate Zn(2+): H67, H69, D71, H72, H139, D158, and H200.

This sequence belongs to the metallo-beta-lactamase superfamily. The cofactor is Zn(2+).

This is Probable metallo-hydrolase YybB (yybB) from Bacillus subtilis (strain 168).